Consider the following 188-residue polypeptide: MSDSKEITKVIVTMVVISAVAAALLALTYTPTQAQLKLLQAEQQKEAMKEILPQAADFEPVTGSEVDDDGNPVVLYYKGVDSSGNVVGYVVERNQVGAQGMIQLLAGISSDFSTITGFQVMKHSETPGLGALITTPEFQGQFVDLPVADTSLTKNGGQVDAISGATISSQAVVDALHSAVDYVSAQEG.

Residues 1-9 (MSDSKEITK) lie on the Cytoplasmic side of the membrane. A helical transmembrane segment spans residues 10 to 30 (VIVTMVVISAVAAALLALTYT). At 31-188 (PTQAQLKLLQ…AVDYVSAQEG (158 aa)) the chain is on the extracellular side. T166 is subject to FMN phosphoryl threonine.

Belongs to the RnfG family. In terms of assembly, the Rnf complex is probably composed of eight subunits, including RnfA, RnfB, RnfC, RnfD, RnfE and RnfG. Requires FMN as cofactor.

Its subcellular location is the cell membrane. Its function is as follows. Part of a membrane-bound complex that couples electron transfer with translocation of ions across the membrane. Catalyzes Na(+) transport, most probably coupled to electron transfer from reduced ferredoxin to methanophenazine and heterodisulfide reductase. Involved in heterodisulfide reduction during methanogenesis from acetate. This Methanosarcina acetivorans (strain ATCC 35395 / DSM 2834 / JCM 12185 / C2A) protein is Ion-translocating oxidoreductase complex subunit G.